The sequence spans 178 residues: Interleukin-10 (178 aa).

The N-terminal stretch at 1–18 is a signal peptide; it reads MHSSALLCYLVFLAGVGA. Disulfide bonds link C30–C126 and C80–C132. N67 carries N-linked (GlcNAc...) asparagine glycosylation. An N-linked (GlcNAc...) asparagine glycan is attached at N134.

Belongs to the IL-10 family. As to quaternary structure, homodimer. Interacts with IL10RA and IL10RB.

The protein resides in the secreted. Its function is as follows. Major immune regulatory cytokine that acts on many cells of the immune system where it has profound anti-inflammatory functions, limiting excessive tissue disruption caused by inflammation. Mechanistically, IL10 binds to its heterotetrameric receptor comprising IL10RA and IL10RB leading to JAK1 and STAT2-mediated phosphorylation of STAT3. In turn, STAT3 translocates to the nucleus where it drives expression of anti-inflammatory mediators. Targets antigen-presenting cells (APCs) such as macrophages and monocytes and inhibits their release of pro-inflammatory cytokines including granulocyte-macrophage colony-stimulating factor /GM-CSF, granulocyte colony-stimulating factor/G-CSF, IL-1 alpha, IL-1 beta, IL-6, IL-8 and TNF-alpha. Also interferes with antigen presentation by reducing the expression of MHC-class II and co-stimulatory molecules, thereby inhibiting their ability to induce T cell activation. In addition, controls the inflammatory response of macrophages by reprogramming essential metabolic pathways including mTOR signaling. This Equus caballus (Horse) protein is Interleukin-10 (IL10).